We begin with the raw amino-acid sequence, 406 residues long: Probable endo-xylogalacturonan hydrolase A (406 aa).

A signal peptide spans 1-18; the sequence is MISLNSIFLLSLVGLSRA. Residues 20 to 49 are disordered; it reads PSRSETSPDRTIKPRAACTPTAGGSSSTDD. PbH1 repeat units lie at residues 183 to 213, 214 to 235, 237 to 257, 266 to 289, 299 to 320, and 368 to 390; these read TSNAQFTSLTMDATSNSDNLPKNTDAFDIGA, STYVTISSVAITNDDDCVAFKP, ANYVTVENVSCTGSHGISVGS, VQNVYARNITMINSSKAAGIKTYP, VKNATFEDFIVDGCDYAFQIQS, and TCDVTISGFEVKAPSGDAKILCG. The active-site Proton donor is the D228. N244 carries N-linked (GlcNAc...) asparagine glycosylation. The active site involves H251. Residues N273, N278, and N301 are each glycosylated (N-linked (GlcNAc...) asparagine).

The protein belongs to the glycosyl hydrolase 28 family.

The protein resides in the secreted. Its function is as follows. Pectinolytic enzyme involved in the degradation of xylogalacturonan (xga), a galacturonan backbone heavily substituted with xylose, and which is one important component of the hairy regions of pectin. Activity requires a galacturonic acid backbone substituted with xylose. The protein is Probable endo-xylogalacturonan hydrolase A (xghA) of Aspergillus flavus (strain ATCC 200026 / FGSC A1120 / IAM 13836 / NRRL 3357 / JCM 12722 / SRRC 167).